The chain runs to 302 residues: MGASLNEIKQRIASTKKTSQITKAMQMVSAAKLTKSEGASKSFQEYSSKIRSVVTHLVAAQLSELRETEQSSLSEGNYHVMLAQRPVKKTGYIVITSDKGLVGGYNSSILKQTMSMIQEDHDSNKEYALIAIGGTGADFFKARGIDVSYELRGLTDQPTFEEVRKIVTTATTMYQNEVFDELYVCYNHHVNSLTSQFRVEKMLPITDLDPSEATSYEQEYLLEPSPEAILDQLLPQYAESLIYGAIIDAKTAEHAAGMTAMKTATDNAQNIISDLTISYNRARQGAITQEITEIVAGAAALE.

It belongs to the ATPase gamma chain family. F-type ATPases have 2 components, CF(1) - the catalytic core - and CF(0) - the membrane proton channel. CF(1) has five subunits: alpha(3), beta(3), gamma(1), delta(1), epsilon(1). CF(0) has three main subunits: a, b and c.

The protein localises to the cell membrane. Produces ATP from ADP in the presence of a proton gradient across the membrane. The gamma chain is believed to be important in regulating ATPase activity and the flow of protons through the CF(0) complex. This Enterococcus faecalis (strain ATCC 700802 / V583) protein is ATP synthase gamma chain.